Here is a 419-residue protein sequence, read N- to C-terminus: Ribosome biogenesis protein WDR12 homolog (419 aa).

The segment at 10–91 is ubiquitin-like (UBL) domain; sequence VQVHLKTKQE…EDAIEIEYVE (82 aa). 7 WD repeats span residues 103-141, 142-184, 191-230, 249-287, 289-328, 334-374, and 378-416; these read LHDDWVSAVKASGKWILTGCYDNTLNIWTNKGKHILTIP, GHTA…NTVE, GHERGVDSVSVSPDGQRFATGSWDTMLKVWSAELEDAGEG, GHRESISAVQWMDASTLLTGSWDHTLKVWDLSLEGIKAE, STNKSIFDASYSKLNHLILTASADKNLRLYDSRTNQGSVV, GHNA…APLY, and GHGEKVLDIDWTNPKYIVSGGSDNTVRVFKSRKALVENM.

It belongs to the WD repeat WDR12/YTM1 family.

The protein resides in the nucleus. The protein localises to the nucleolus. It localises to the nucleoplasm. Functionally, required for maturation of ribosomal RNAs and formation of the large ribosomal subunit. This chain is Ribosome biogenesis protein WDR12 homolog, found in Drosophila persimilis (Fruit fly).